The following is a 193-amino-acid chain: DNA damage-inducible transcript 4-like protein (193 aa).

It belongs to the DDIT4 family.

The protein localises to the cytoplasm. Inhibits cell growth by regulating the TOR signaling pathway upstream of the TSC1-TSC2 complex and downstream of AKT1. This is DNA damage-inducible transcript 4-like protein (DDIT4L) from Pongo abelii (Sumatran orangutan).